Consider the following 283-residue polypeptide: MKKVGVIPNINKDKDLEVTKSVVNWLLDHGSEPYLNEIVAARIGYEKHGKKANEIYSKSDFLIALGGDGTILNVARLCAPFGTPILAVNLGHLGFLTEIDASELFPSLEKIYKGEYAIEKRMMLEANVVKNDMEVINFRALNDIVITRGAFSRMARIKAYVNDNYVDTYLADGVIVATPTGSTAYSLSAGGPIVYPTVEVIIITPICPHTLYSRSIVVSPDDVIRLEIAEENQDLMITTDGQQGYKIDYRDVIYIKKSNEYTNLIKVKNSNFFDLLRDKLTER.

Asp68 functions as the Proton acceptor in the catalytic mechanism. NAD(+) contacts are provided by residues 68–69, 142–143, Arg153, Asp172, 183–188, and Gln242; these read DG, ND, and TAYSLS.

This sequence belongs to the NAD kinase family. A divalent metal cation serves as cofactor.

Its subcellular location is the cytoplasm. It carries out the reaction NAD(+) + ATP = ADP + NADP(+) + H(+). Functionally, involved in the regulation of the intracellular balance of NAD and NADP, and is a key enzyme in the biosynthesis of NADP. Catalyzes specifically the phosphorylation on 2'-hydroxyl of the adenosine moiety of NAD to yield NADP. This Caldanaerobacter subterraneus subsp. tengcongensis (strain DSM 15242 / JCM 11007 / NBRC 100824 / MB4) (Thermoanaerobacter tengcongensis) protein is NAD kinase.